The chain runs to 687 residues: Protein Smaug homolog 2 (687 aa).

Over residues 160-172 (TRPEPSYHSRQGS) the composition is skewed to basic and acidic residues. Residues 160 to 301 (TRPEPSYHSR…NTFQEDGSGM (142 aa)) form a disordered region. Ser-172 carries the phosphoserine modification. 2 stretches are compositionally biased toward low complexity: residues 175–190 (WGGPAELAPGEAGPGW) and 200–211 (HVPFHPSSSVPP). Residues 215–224 (SIGSNANTGL) show a composition bias toward polar residues. 4 positions are modified to phosphoserine: Ser-271, Ser-278, Ser-279, and Ser-281. The span at 278-290 (SSGSEQTEEQGSS) shows a compositional bias: low complexity. Positions 299 to 372 (SGMKDVPSWL…LKSLEKDVLE (74 aa)) constitute an SAM domain. Thr-400 is modified (phosphothreonine). Residues 402-464 (TAKDEGRGEP…APAPVADGDI (63 aa)) are disordered. A compositionally biased stretch (basic and acidic residues) spans 424-435 (GSDKGTEAKDPP). Residues 448–461 (PSDSSEPAPAPVAD) are compositionally biased toward low complexity. Ser-548, Ser-550, Ser-556, Ser-585, and Ser-593 each carry phosphoserine. The residue at position 595 (Arg-595) is an Asymmetric dimethylarginine. The interval 600–636 (SPSLGGQGRQNLWFANPGGSNSMPSQSRSSVQRTHSL) is disordered. The span at 617 to 636 (GGSNSMPSQSRSSVQRTHSL) shows a compositional bias: polar residues. Position 621 is a phosphoserine (Ser-621).

It belongs to the SMAUG family.

It localises to the cytoplasm. It is found in the nucleus. Its function is as follows. Has transcriptional repressor activity. Overexpression inhibits the transcriptional activities of AP-1, p53/TP53 and CDKN1A. In Mus musculus (Mouse), this protein is Protein Smaug homolog 2 (Samd4b).